The primary structure comprises 579 residues: Protein LYRIC (579 aa).

Residues 1–48 (MAARSWQDELAQQAEEGSARLRELLSVGLGFLRTELGLDLGLEPKRYP) lie on the Lumenal side of the membrane. Positions 1-71 (MAARSWQDEL…LLLFLLGYGW (71 aa)) are activation of NF-kappa-B. A helical transmembrane segment spans residues 49–69 (GWVILVGTGALGLLLLFLLGY). Residues 70–579 (GWAAACAGAR…KKKKKARRET (510 aa)) are Cytoplasmic-facing. An interaction with BCCIP region spans residues 72-168 (AAACAGARKK…EKSKKNKKKS (97 aa)). The interval 78–222 (ARKKRRSPPR…SGSLDSTIPG (145 aa)) is disordered. The tract at residues 100–204 (DDLAQLKNLR…ISHREKRQQR (105 aa)) is interaction with RELA. Basic and acidic residues predominate over residues 108-126 (LRSEEQKKKNRKKLPEKPK). Residues 159–168 (EKSKKNKKKS) are compositionally biased toward basic residues. Residue S179 is modified to Phosphoserine. Basic residues predominate over residues 197 to 207 (HREKRQQRKRD). 2 positions are modified to phosphoserine: S215 and S250. An N6-acetyllysine modification is found at K263. A disordered region spans residues 277–579 (NLTVNGGGWS…KKKKKARRET (303 aa)). Residues S297, S303, and S308 each carry the phosphoserine modification. Residues 317-329 (SAWTQDTGDTNAN) show a composition bias toward polar residues. Phosphoserine occurs at positions 341 and 366. Composition is skewed to polar residues over residues 351-369 (EPVS…SRNQ), 380-391 (NGLSSADPSSDW), and 410-420 (LKSQEPISNDQ). Residues 378–440 (GLNGLSSADP…EGALPTGKSK (63 aa)) are lung-homing for mammary tumors. A phosphoserine mark is found at S412 and S423. Residues 421-431 (KVSDDDKEKGE) show a composition bias toward basic and acidic residues. The segment covering 438 to 448 (KSKKKKKKKKK) has biased composition (basic residues). Residues 449–470 (QGEDNSHTQDTEDLEKDTREEL) show a composition bias toward basic and acidic residues. 4 positions are modified to phosphoserine: S454, S475, S491, and S493. Composition is skewed to polar residues over residues 517–533 (PSIT…SSQV) and 546–565 (NAKQ…NWES). Phosphoserine is present on S565. The segment covering 568 to 579 (QIKKKKKARRET) has biased composition (basic residues).

As to quaternary structure, interacts with BCCIP, CREBBP/CBP and RELA/p65. In terms of tissue distribution, in the mammary gland, expressed at the apical surface of epithelial cells lining ducts, as well as in the mammary fat pad. Not detected in the spleen, kidney, lung, or skin; minute amounts seen in the liver. Expressed in Purkinje neurons in the early postnatal and adult cerebellum. Overexpressed in mammary tumors (at protein level).

Its subcellular location is the endoplasmic reticulum membrane. It localises to the nucleus membrane. The protein resides in the cell junction. The protein localises to the tight junction. It is found in the nucleus. Its subcellular location is the nucleolus. It localises to the cytoplasm. The protein resides in the perinuclear region. Its function is as follows. Down-regulates SLC1A2/EAAT2 promoter activity when expressed ectopically. Activates the nuclear factor kappa-B (NF-kappa-B) transcription factor. Promotes anchorage-independent growth of immortalized melanocytes and astrocytes which is a key component in tumor cell expansion. Promotes lung metastasis and also has an effect on bone and brain metastasis, possibly by enhancing the seeding of tumor cells to the target organ endothelium. Induces chemoresistance. This chain is Protein LYRIC (Mtdh), found in Mus musculus (Mouse).